The following is a 559-amino-acid chain: D-2-hydroxyglutarate dehydrogenase, mitochondrial (559 aa).

The N-terminal 78 residues, 1-78 (MMMQKLRRSG…GMLLQQYKCF (78 aa)), are a transit peptide targeting the mitochondrion. Positions 130–309 (YKGSSKLMLL…TKVSILTQPK (180 aa)) constitute an FAD-binding PCMH-type domain.

It belongs to the FAD-binding oxidoreductase/transferase type 4 family. Homodimer. It depends on FAD as a cofactor.

The protein localises to the mitochondrion. It carries out the reaction (R)-2-hydroxyglutarate + A = 2-oxoglutarate + AH2. Functionally, catalyzes the oxidation of (R)-2-hydroxyglutarate to 2-oxoglutarate. May be involved in the catabolism of propionyl-CoA derived from beta-oxidation. Involved in degradation of lysine for the supply of carbon and electrons to the ETF/ETFQO complex during dark-induced sugar starvation. The protein is D-2-hydroxyglutarate dehydrogenase, mitochondrial (D2HGDH) of Arabidopsis thaliana (Mouse-ear cress).